The sequence spans 230 residues: Large ribosomal subunit protein uL1c (230 aa).

The protein belongs to the universal ribosomal protein uL1 family. Part of the 50S ribosomal subunit.

The protein resides in the plastid. The protein localises to the chloroplast. Its function is as follows. Binds directly to 23S rRNA. Might be involved in E site tRNA release (Potential). The polypeptide is Large ribosomal subunit protein uL1c (rpl1) (Phaeodactylum tricornutum (strain CCAP 1055/1)).